Here is a 660-residue protein sequence, read N- to C-terminus: Bifunctional polymyxin resistance protein ArnA (660 aa).

Residues 1 to 304 (MKTVVFAYHD…MLGLVQGSRL (304 aa)) are formyltransferase ArnAFT. (6R)-10-formyltetrahydrofolate is bound at residue 86–88 (HLI). Residue His104 is the Proton donor; for formyltransferase activity of the active site. Residues Arg114 and 136–140 (VKRAD) contribute to the (6R)-10-formyltetrahydrofolate site. Positions 314 to 660 (RRTRVLILGV…RTVDLTDKPS (347 aa)) are dehydrogenase ArnADH. NAD(+) contacts are provided by residues Asp347 and 368–369 (DI). UDP-alpha-D-glucuronate is bound by residues Ala393, Tyr398, and 432 to 433 (TS). Glu434 acts as the Proton acceptor; for decarboxylase activity in catalysis. Residues Arg460, Asn492, 526 to 535 (KLIDGGKQKR), and Tyr613 each bind UDP-alpha-D-glucuronate. Arg619 functions as the Proton donor; for decarboxylase activity in the catalytic mechanism.

In the N-terminal section; belongs to the Fmt family. UDP-L-Ara4N formyltransferase subfamily. The protein in the C-terminal section; belongs to the NAD(P)-dependent epimerase/dehydratase family. UDP-glucuronic acid decarboxylase subfamily. In terms of assembly, homohexamer, formed by a dimer of trimers.

The enzyme catalyses UDP-alpha-D-glucuronate + NAD(+) = UDP-beta-L-threo-pentopyranos-4-ulose + CO2 + NADH. It catalyses the reaction UDP-4-amino-4-deoxy-beta-L-arabinose + (6R)-10-formyltetrahydrofolate = UDP-4-deoxy-4-formamido-beta-L-arabinose + (6S)-5,6,7,8-tetrahydrofolate + H(+). It participates in nucleotide-sugar biosynthesis; UDP-4-deoxy-4-formamido-beta-L-arabinose biosynthesis; UDP-4-deoxy-4-formamido-beta-L-arabinose from UDP-alpha-D-glucuronate: step 1/3. Its pathway is nucleotide-sugar biosynthesis; UDP-4-deoxy-4-formamido-beta-L-arabinose biosynthesis; UDP-4-deoxy-4-formamido-beta-L-arabinose from UDP-alpha-D-glucuronate: step 3/3. The protein operates within bacterial outer membrane biogenesis; lipopolysaccharide biosynthesis. Bifunctional enzyme that catalyzes the oxidative decarboxylation of UDP-glucuronic acid (UDP-GlcUA) to UDP-4-keto-arabinose (UDP-Ara4O) and the addition of a formyl group to UDP-4-amino-4-deoxy-L-arabinose (UDP-L-Ara4N) to form UDP-L-4-formamido-arabinose (UDP-L-Ara4FN). The modified arabinose is attached to lipid A and is required for resistance to polymyxin and cationic antimicrobial peptides. The protein is Bifunctional polymyxin resistance protein ArnA of Shigella flexneri.